The following is a 272-amino-acid chain: Elongation factor Ts (272 aa).

An involved in Mg(2+) ion dislocation from EF-Tu region spans residues 86–89; sequence TDFV.

It belongs to the EF-Ts family.

Its subcellular location is the cytoplasm. Functionally, associates with the EF-Tu.GDP complex and induces the exchange of GDP to GTP. It remains bound to the aminoacyl-tRNA.EF-Tu.GTP complex up to the GTP hydrolysis stage on the ribosome. The sequence is that of Elongation factor Ts from Blochmanniella pennsylvanica (strain BPEN).